Reading from the N-terminus, the 432-residue chain is Selenocysteine lyase (432 aa).

Position 1 is an N-acetylmethionine (Met1). The interval 1–20 is disordered; that stretch reads MDVARNGARGSVESPPNRKV. Ser117 is subject to Phosphoserine. Lys247 carries the post-translational modification N6-(pyridoxal phosphate)lysine. Cys375 acts as the S-selanylcysteine intermediate in catalysis.

It belongs to the class-V pyridoxal-phosphate-dependent aminotransferase family. Homodimer. It depends on pyridoxal 5'-phosphate as a cofactor.

It localises to the cytoplasm. It is found in the cytosol. It carries out the reaction L-selenocysteine + AH2 = hydrogenselenide + L-alanine + A + H(+). Catalyzes the decomposition of L-selenocysteine to L-alanine and elemental selenium. This is Selenocysteine lyase (Scly) from Rattus norvegicus (Rat).